A 207-amino-acid chain; its full sequence is Outer-membrane lipoprotein LolB (207 aa).

Residues 1 to 21 (MPMRKRHFYRLLPLASLLLAA) form the signal peptide. Cys-22 is lipidated: N-palmitoyl cysteine. Residue Cys-22 is the site of S-diacylglycerol cysteine attachment.

This sequence belongs to the LolB family. As to quaternary structure, monomer.

The protein resides in the cell outer membrane. Plays a critical role in the incorporation of lipoproteins in the outer membrane after they are released by the LolA protein. The polypeptide is Outer-membrane lipoprotein LolB (Yersinia pseudotuberculosis serotype O:3 (strain YPIII)).